Reading from the N-terminus, the 270-residue chain is Phospholysine phosphohistidine inorganic pyrophosphate phosphatase (270 aa).

Mg(2+)-binding residues include Asp17 and Ser19. Residues 17–19 (DIS), 54–55 (TN), and Lys189 contribute to the substrate site. Asp214 lines the Mg(2+) pocket.

The protein belongs to the HAD-like hydrolase superfamily. Homodimer. It depends on Mg(2+) as a cofactor. Detected in liver (at protein level).

The protein localises to the cytoplasm. The protein resides in the nucleus. The enzyme catalyses diphosphate + H2O = 2 phosphate + H(+). Phosphatase that hydrolyzes imidodiphosphate, 3-phosphohistidine and 6-phospholysine. Has broad substrate specificity and can also hydrolyze inorganic diphosphate, but with lower efficiency. The chain is Phospholysine phosphohistidine inorganic pyrophosphate phosphatase (LHPP) from Bos taurus (Bovine).